The following is a 281-amino-acid chain: Digeranylgeranylglyceryl phosphate synthase (281 aa).

A run of 8 helical transmembrane segments spans residues 7-27, 32-52, 72-91, 95-117, 128-148, 193-213, 214-234, and 258-278; these read ILRP…ALIT, FSVL…NVIN, GRIS…ALAS, FYLG…YYAW, ITIS…LGEV, ISGV…PSLY, LLGI…AVFL, and VGMA…TALT.

This sequence belongs to the UbiA prenyltransferase family. DGGGP synthase subfamily. Mg(2+) is required as a cofactor.

The protein resides in the cell membrane. The catalysed reaction is sn-3-O-(geranylgeranyl)glycerol 1-phosphate + (2E,6E,10E)-geranylgeranyl diphosphate = 2,3-bis-O-(geranylgeranyl)-sn-glycerol 1-phosphate + diphosphate. It functions in the pathway membrane lipid metabolism; glycerophospholipid metabolism. Prenyltransferase that catalyzes the transfer of the geranylgeranyl moiety of geranylgeranyl diphosphate (GGPP) to the C2 hydroxyl of (S)-3-O-geranylgeranylglyceryl phosphate (GGGP). This reaction is the second ether-bond-formation step in the biosynthesis of archaeal membrane lipids. The protein is Digeranylgeranylglyceryl phosphate synthase of Methanothermobacter thermautotrophicus (strain ATCC 29096 / DSM 1053 / JCM 10044 / NBRC 100330 / Delta H) (Methanobacterium thermoautotrophicum).